Here is a 461-residue protein sequence, read N- to C-terminus: Cysteine--tRNA ligase (461 aa).

Cysteine 29 contacts Zn(2+). A 'HIGH' region motif is present at residues 31–41 (PTVYNYAHIGN). Residues cysteine 214, histidine 239, and glutamate 243 each contribute to the Zn(2+) site. Residues 271–275 (KMSKS) carry the 'KMSKS' region motif. Residue lysine 274 coordinates ATP.

Belongs to the class-I aminoacyl-tRNA synthetase family. In terms of assembly, monomer. Requires Zn(2+) as cofactor.

Its subcellular location is the cytoplasm. It catalyses the reaction tRNA(Cys) + L-cysteine + ATP = L-cysteinyl-tRNA(Cys) + AMP + diphosphate. This chain is Cysteine--tRNA ligase, found in Hyphomonas neptunium (strain ATCC 15444).